The chain runs to 762 residues: MKTVKIRGYCDRLSAAPGETIRFYVSADTSDGSYEAELVRLIHGDTNPAGPGYKEESVKSAADGSYPARFQRTQFGSFVEVPDASGALLADGAFSVHTFLWSTTPGRGRQGLVSRWDDERQCGWSLAIEEGRLVFTIGDESGTTNRVISDRPLFQEVWYSVTAVFDPVQKTISLHQKSVVNRTNSRFGLVVPLDSDTTVSAVSQVSPGDSRTSLLIAGLGEAAAADGRTWCIANFNGKIDAPKLYGRALSSEEAMKLAEGTVAEPWSRLAHWDFSAGIGPDGIPTDHVVDISGNGHHGQCVNQPDRGSTGWNWDGHEENFIHCPQQYGALWFHEDCLDDCRWDKDFEITLPDGLKSDFYAMKIRYGDSEDYIPFFVLPPRGKATAKILVLASTFSYLAYANEQIMHKADIGQAVAGHTPVLNENDVELHRNLDYYGLSTYDGHVDGRGVQYTSWRRPILNLRPKHRQGFGSIWELPADLHLIDWLNHNGFDYDVATEHDLNEQGVDLLRRYNVVLTGSHPEYQTWANADAWEDYLADGGRGMYLAANGMYWIVSVHPEKPWVMEVRKELGVTAWEAPPGEYHYSTNGRRGGRFRGRARATQKIWGTGMSSFGFDHSGYFVQMPDSQDKRAAWIMDGIDPDERIGDGGLVGGGAGGYELDRYDLSLGTPPNTLLLASSVEHSVVYTVIPDDKSFPHPGMNGGEHPFVRADITYFSTANGGGMFSTSSISWLGSLSWNNYDNNVSRMTRNVLTQFMKDEPAPLV.

In terms of assembly, heterotetramer of two DmfA1 (alpha) and two DmfA2 (beta) subunits.

The catalysed reaction is N,N-dimethylformamide + H2O = dimethylamine + formate. Its function is as follows. Hydrolyzes N,N-dimethylformamide, and to a lesser extent N,N-dimethylacetamide and N,N-diethylacetamide. Has no activity against the substituted amides N-methylformamide, N-ethylformamide, N-ethylformamide and N-methylacetamide or the unsubstituted amides formamide, nicotinamide, acetoamide, benzamide, acetamide and acrylamide. In Paracoccus aminophilus, this protein is N,N-dimethylformamidase beta subunit.